The primary structure comprises 157 residues: Protein Smg (157 aa).

The protein belongs to the Smg family.

The chain is Protein Smg from Enterobacter sp. (strain 638).